The chain runs to 194 residues: Peptidyl-tRNA hydrolase (194 aa).

Tyr17 is a tRNA binding site. His22 acts as the Proton acceptor in catalysis. Positions 68, 70, and 116 each coordinate tRNA.

The protein belongs to the PTH family. As to quaternary structure, monomer.

It is found in the cytoplasm. The catalysed reaction is an N-acyl-L-alpha-aminoacyl-tRNA + H2O = an N-acyl-L-amino acid + a tRNA + H(+). In terms of biological role, hydrolyzes ribosome-free peptidyl-tRNAs (with 1 or more amino acids incorporated), which drop off the ribosome during protein synthesis, or as a result of ribosome stalling. Functionally, catalyzes the release of premature peptidyl moieties from peptidyl-tRNA molecules trapped in stalled 50S ribosomal subunits, and thus maintains levels of free tRNAs and 50S ribosomes. The protein is Peptidyl-tRNA hydrolase of Proteus mirabilis (strain HI4320).